The chain runs to 148 residues: FAD synthase (148 aa).

Residues 14-15 (TF), 19-22 (HPGH), and aspartate 97 each bind ATP.

Belongs to the archaeal FAD synthase family. As to quaternary structure, homodimer. The cofactor is a divalent metal cation.

It catalyses the reaction FMN + ATP + H(+) = FAD + diphosphate. It functions in the pathway cofactor biosynthesis; FAD biosynthesis; FAD from FMN: step 1/1. Catalyzes the transfer of the AMP portion of ATP to flavin mononucleotide (FMN) to produce flavin adenine dinucleotide (FAD) coenzyme. In Natrialba magadii (strain ATCC 43099 / DSM 3394 / CCM 3739 / CIP 104546 / IAM 13178 / JCM 8861 / NBRC 102185 / NCIMB 2190 / MS3) (Natronobacterium magadii), this protein is FAD synthase.